Consider the following 236-residue polypeptide: Phosphatidylserine decarboxylase proenzyme (236 aa).

Serine 194 acts as the Schiff-base intermediate with substrate; via pyruvic acid in catalysis. Position 194 is a pyruvic acid (Ser); by autocatalysis (serine 194).

Belongs to the phosphatidylserine decarboxylase family. PSD-A subfamily. Heterodimer of a large membrane-associated beta subunit and a small pyruvoyl-containing alpha subunit. Pyruvate is required as a cofactor. Is synthesized initially as an inactive proenzyme. Formation of the active enzyme involves a self-maturation process in which the active site pyruvoyl group is generated from an internal serine residue via an autocatalytic post-translational modification. Two non-identical subunits are generated from the proenzyme in this reaction, and the pyruvate is formed at the N-terminus of the alpha chain, which is derived from the carboxyl end of the proenzyme. The post-translation cleavage follows an unusual pathway, termed non-hydrolytic serinolysis, in which the side chain hydroxyl group of the serine supplies its oxygen atom to form the C-terminus of the beta chain, while the remainder of the serine residue undergoes an oxidative deamination to produce ammonia and the pyruvoyl prosthetic group on the alpha chain.

Its subcellular location is the cell membrane. It carries out the reaction a 1,2-diacyl-sn-glycero-3-phospho-L-serine + H(+) = a 1,2-diacyl-sn-glycero-3-phosphoethanolamine + CO2. Its pathway is phospholipid metabolism; phosphatidylethanolamine biosynthesis; phosphatidylethanolamine from CDP-diacylglycerol: step 2/2. Catalyzes the formation of phosphatidylethanolamine (PtdEtn) from phosphatidylserine (PtdSer). The chain is Phosphatidylserine decarboxylase proenzyme from Rhodospirillum rubrum (strain ATCC 11170 / ATH 1.1.1 / DSM 467 / LMG 4362 / NCIMB 8255 / S1).